A 121-amino-acid polypeptide reads, in one-letter code: Large ribosomal subunit protein uL14c (121 aa).

It belongs to the universal ribosomal protein uL14 family. As to quaternary structure, part of the 50S ribosomal subunit.

Its subcellular location is the plastid. It localises to the chloroplast. In terms of biological role, binds to 23S rRNA. The polypeptide is Large ribosomal subunit protein uL14c (Pelargonium hortorum (Common geranium)).